The following is a 107-amino-acid chain: SOSS complex subunit C (107 aa).

The protein belongs to the SOSS-C family. In terms of assembly, belongs to the multiprotein complex Integrator. Component of the SOSS complex, composed of soss-b (soss-b1/nabp2 or soss-b2/nabp1), soss-a/ints3 and soss-c/inip.

It localises to the nucleus. Functionally, component of the SOSS complex, a multiprotein complex that functions downstream of the MRN complex to promote DNA repair and G2/M checkpoint. The SOSS complex associates with single-stranded DNA at DNA lesions and influences diverse endpoints in the cellular DNA damage response including cell-cycle checkpoint activation, recombinational repair and maintenance of genomic stability. Required for efficient homologous recombination-dependent repair of double-strand breaks (DSBs). This Salmo salar (Atlantic salmon) protein is SOSS complex subunit C (inip).